The primary structure comprises 388 residues: Putative 8-amino-7-oxononanoate synthase (388 aa).

Arginine 23 is a substrate binding site. 110 to 111 lines the pyridoxal 5'-phosphate pocket; it reads GY. Substrate is bound at residue histidine 135. Pyridoxal 5'-phosphate is bound by residues serine 182, 207 to 210, and 238 to 241; these read DDAH and TLSK. At lysine 241 the chain carries N6-(pyridoxal phosphate)lysine. Threonine 355 lines the substrate pocket.

The protein belongs to the class-II pyridoxal-phosphate-dependent aminotransferase family. BioF subfamily. As to quaternary structure, homodimer. The cofactor is pyridoxal 5'-phosphate.

It catalyses the reaction 6-carboxyhexanoyl-[ACP] + L-alanine + H(+) = (8S)-8-amino-7-oxononanoate + holo-[ACP] + CO2. It participates in cofactor biosynthesis; biotin biosynthesis. Functionally, catalyzes the decarboxylative condensation of pimeloyl-[acyl-carrier protein] and L-alanine to produce 8-amino-7-oxononanoate (AON), [acyl-carrier protein], and carbon dioxide. This is Putative 8-amino-7-oxononanoate synthase (bioF) from Thermodesulfovibrio yellowstonii (strain ATCC 51303 / DSM 11347 / YP87).